The primary structure comprises 100 residues: Small ribosomal subunit protein uS14c (100 aa).

It belongs to the universal ribosomal protein uS14 family. As to quaternary structure, part of the 30S ribosomal subunit.

The protein localises to the plastid. It localises to the chloroplast. Functionally, binds 16S rRNA, required for the assembly of 30S particles. In Ostreococcus tauri, this protein is Small ribosomal subunit protein uS14c.